A 232-amino-acid polypeptide reads, in one-letter code: Large ribosomal subunit protein uL1 (232 aa).

Belongs to the universal ribosomal protein uL1 family. As to quaternary structure, part of the 50S ribosomal subunit.

In terms of biological role, binds directly to 23S rRNA. The L1 stalk is quite mobile in the ribosome, and is involved in E site tRNA release. Functionally, protein L1 is also a translational repressor protein, it controls the translation of the L11 operon by binding to its mRNA. In Clostridium novyi (strain NT), this protein is Large ribosomal subunit protein uL1.